A 166-amino-acid chain; its full sequence is Thiol peroxidase (166 aa).

Residues 18-166 form the Thioredoxin domain; sequence LKVGDKAPDV…NYEALLKVLK (149 aa). Residue Cys-60 is the Cysteine sulfenic acid (-SOH) intermediate of the active site. Cys-60 and Cys-94 are disulfide-bonded.

It belongs to the peroxiredoxin family. Tpx subfamily. Homodimer.

It catalyses the reaction a hydroperoxide + [thioredoxin]-dithiol = an alcohol + [thioredoxin]-disulfide + H2O. Thiol-specific peroxidase that catalyzes the reduction of hydrogen peroxide and organic hydroperoxides to water and alcohols, respectively. Plays a role in cell protection against oxidative stress by detoxifying peroxides. This Helicobacter pylori (strain J99 / ATCC 700824) (Campylobacter pylori J99) protein is Thiol peroxidase.